We begin with the raw amino-acid sequence, 388 residues long: Succinate--CoA ligase [ADP-forming] subunit beta (388 aa).

Positions 9–245 (KELLASYGLP…KSQENERELK (237 aa)) constitute an ATP-grasp domain. ATP contacts are provided by residues Lys46, 53–55 (GRG), Glu100, Tyr103, and Glu108. Asn200 and Asp214 together coordinate Mg(2+). Substrate is bound by residues Asn265 and 322 to 324 (GIV).

Belongs to the succinate/malate CoA ligase beta subunit family. In terms of assembly, heterotetramer of two alpha and two beta subunits. Requires Mg(2+) as cofactor.

The catalysed reaction is succinate + ATP + CoA = succinyl-CoA + ADP + phosphate. It carries out the reaction GTP + succinate + CoA = succinyl-CoA + GDP + phosphate. It participates in carbohydrate metabolism; tricarboxylic acid cycle; succinate from succinyl-CoA (ligase route): step 1/1. Functionally, succinyl-CoA synthetase functions in the citric acid cycle (TCA), coupling the hydrolysis of succinyl-CoA to the synthesis of either ATP or GTP and thus represents the only step of substrate-level phosphorylation in the TCA. The beta subunit provides nucleotide specificity of the enzyme and binds the substrate succinate, while the binding sites for coenzyme A and phosphate are found in the alpha subunit. The sequence is that of Succinate--CoA ligase [ADP-forming] subunit beta from Neisseria gonorrhoeae (strain NCCP11945).